We begin with the raw amino-acid sequence, 305 residues long: NDP-polyphosphate phosphotransferase 1 (305 aa).

Belongs to the polyphosphate kinase 2 (PPK2) family. Class I subfamily.

It catalyses the reaction [phosphate](n) + ATP = [phosphate](n+1) + ADP. It carries out the reaction [phosphate](n) + CTP = [phosphate](n+1) + CDP. The catalysed reaction is [phosphate](n) + GTP = [phosphate](n+1) + GDP. The enzyme catalyses [phosphate](n) + UTP = [phosphate](n+1) + UDP. Shows little dependence on metals. Uses inorganic polyphosphate (polyP) as a donor to convert NDP to NTP. PolyP hydrolysis is slightly faster with GDP, but it can also use ADP, CDP and UDP. In Ruegeria pomeroyi (strain ATCC 700808 / DSM 15171 / DSS-3) (Silicibacter pomeroyi), this protein is NDP-polyphosphate phosphotransferase 1.